Consider the following 485-residue polypeptide: Benzaldehyde dehydrogenase YfmT (485 aa).

231–236 (GSTKVG) serves as a coordination point for NAD(+). Catalysis depends on residues E253 and C287.

Belongs to the aldehyde dehydrogenase family.

The catalysed reaction is benzaldehyde + NAD(+) + H2O = benzoate + NADH + 2 H(+). The enzyme catalyses vanillin + NAD(+) + H2O = vanillate + NADH + 2 H(+). Functionally, a benzaldehyde dehydrogenase able to act on substrates with 3- and 4-hydroxy and methoxy substitutions; converts vanillin (4-hydroxy-3-methoxybenzaldehyde) to vanillic acid in vitro. The physiological substrate is unknown. In Bacillus subtilis (strain 168), this protein is Benzaldehyde dehydrogenase YfmT (yfmT).